The sequence spans 220 residues: Recombination protein RecR (220 aa).

The C4-type zinc-finger motif lies at 57–72 (CPICFNITDAEKCDVC). A Toprim domain is found at 80-173 (RTICVVEEPG…AISRIAYGVP (94 aa)). Residues 190–220 (LTGRQTVSKPQPPQRPGDEDGADGAAVPASR) are disordered.

The protein belongs to the RecR family.

May play a role in DNA repair. It seems to be involved in an RecBC-independent recombinational process of DNA repair. It may act with RecF and RecO. In Deinococcus radiodurans (strain ATCC 13939 / DSM 20539 / JCM 16871 / CCUG 27074 / LMG 4051 / NBRC 15346 / NCIMB 9279 / VKM B-1422 / R1), this protein is Recombination protein RecR.